The sequence spans 355 residues: 3-dehydroquinate synthase (355 aa).

NAD(+) is bound by residues 98-102, 122-123, Lys135, Lys144, and 162-165; these read GVVGD, TT, and TLDT. The Zn(2+) site is built by Glu177, His240, and His257.

This sequence belongs to the sugar phosphate cyclases superfamily. Dehydroquinate synthase family. It depends on Co(2+) as a cofactor. Requires Zn(2+) as cofactor. NAD(+) serves as cofactor.

The protein localises to the cytoplasm. The enzyme catalyses 7-phospho-2-dehydro-3-deoxy-D-arabino-heptonate = 3-dehydroquinate + phosphate. It functions in the pathway metabolic intermediate biosynthesis; chorismate biosynthesis; chorismate from D-erythrose 4-phosphate and phosphoenolpyruvate: step 2/7. Functionally, catalyzes the conversion of 3-deoxy-D-arabino-heptulosonate 7-phosphate (DAHP) to dehydroquinate (DHQ). The sequence is that of 3-dehydroquinate synthase from Dictyoglomus turgidum (strain DSM 6724 / Z-1310).